The sequence spans 411 residues: Glutamate dehydrogenase 2 (411 aa).

Lys102 is an active-site residue.

This sequence belongs to the Glu/Leu/Phe/Val dehydrogenases family.

Its subcellular location is the mitochondrion. It carries out the reaction L-glutamate + NAD(+) + H2O = 2-oxoglutarate + NH4(+) + NADH + H(+). The catalysed reaction is L-glutamate + NADP(+) + H2O = 2-oxoglutarate + NH4(+) + NADPH + H(+). The sequence is that of Glutamate dehydrogenase 2 (GDH2) from Arabidopsis thaliana (Mouse-ear cress).